Reading from the N-terminus, the 861-residue chain is Ataxin-7-like protein 1 (861 aa).

5 disordered regions span residues 1–31 (MTSERSRIPCLSAAAAEGTGKKQQEGRAMAT), 154–189 (GHHSASSTSKPFKTPKDNLLTSSSKQHTVFPAKGSR), 342–448 (KSRE…GADE), 606–673 (PIPA…LSGP), and 772–861 (FDKS…RTLP). The SCA7 domain maps to 284–351 (RRLSEREFDP…KSREKEVKDK (68 aa)). Residues 342-354 (KSREKEVKDKEHL) show a composition bias toward basic and acidic residues. Polar residues predominate over residues 355-369 (LTSTREILPSQSGPA). Low complexity-rich tracts occupy residues 372-381 (SLLGSSGSSG), 403-417 (SSANSISSSTSSNHS), and 606-616 (PIPAVIPSPSH). Residues 617–627 (KPSKTKTSKSS) show a composition bias toward basic residues. Positions 628–641 (KVKDLSTRSDESPS) are enriched in basic and acidic residues. Low complexity-rich tracts occupy residues 648-671 (QSSTSSSSSSSSSSLQTSLSSPLS) and 783-794 (SSSSSKACKITK). Polar residues predominate over residues 817–828 (VNSTSSRQVGKN). Positions 829 to 847 (SSLALSQSSPSSISSPGHS) are enriched in low complexity.

This chain is Ataxin-7-like protein 1 (ATXN7L1), found in Homo sapiens (Human).